The primary structure comprises 356 residues: Popeye domain-containing protein 1 (356 aa).

The Extracellular portion of the chain corresponds to 1 to 48; the sequence is MNFTEPSPLAQSTVVGFLPELESLTPVPSNETSCENWREVHHLVFHAA. Residues asparagine 2 and asparagine 30 are each glycosylated (N-linked (GlcNAc...) asparagine). The helical transmembrane segment at 49–69 threads the bilayer; that stretch reads NVCFAVGLLIPTTLHLHMILL. Arginine 70 is a topological domain (cytoplasmic). A helical membrane pass occupies residues 71-91; sequence VMLSIGCTLYVVWATLYRCAL. Residue aspartate 92 is a topological domain, extracellular. Residues 93–113 traverse the membrane as a helical segment; it reads MMIWNSVFLGINILHLSYLLY. The tract at residues 93-115 is required for interaction with CAV3; the sequence is MMIWNSVFLGINILHLSYLLYKK. Residues 114 to 356 lie on the Cytoplasmic side of the membrane; it reads KKRPVKIEKD…VPVSPAHQLP (243 aa). The interval 136–186 is required for interaction with KCNK2; that stretch reads RVPPDLFRRLTGQFCVIQTLKRGQVYATEDKTSVDDRLSILLKGRMKVSYR. Residues serine 295 and serine 318 each carry the phosphoserine modification. The span at 313–323 shows a compositional bias: low complexity; sequence SSSTASLPMSS. Positions 313–356 are disordered; the sequence is SSSTASLPMSSPQQRASPKMKPIEEGLEDDDEVFVPVSPAHQLP.

The protein belongs to the popeye family. Homodimer. Homodimerization requires the C-terminus cytoplasmic region. Interacts (via the C-terminus cytoplasmic tail) with TJP1. Interacts (via the C-terminus cytoplasmic tail) with ARHGEF25/GEFT (via the DH domain). Interacts (via the C-terminus cytoplasmic tail) with VAMP3. Interacts with KCNK2; the interaction enhances KCNK2 surface expression and is inhibited by cAMP. Interacts with CAV3. As to expression, strongly expressed in heart and skeletal muscle. Weakly expressed in brain, spleen, liver, kidney and lung.

The protein resides in the lateral cell membrane. Its subcellular location is the cell junction. It is found in the tight junction. The protein localises to the membrane. It localises to the cell membrane. The protein resides in the sarcolemma. Its subcellular location is the caveola. In terms of biological role, cell adhesion molecule involved in the establishment and/or maintenance of cell integrity. Involved in the formation and regulation of the tight junction (TJ) paracellular permeability barrier in epithelial cells. Plays a role in VAMP3-mediated vesicular transport and recycling of different receptor molecules through its interaction with VAMP3. Plays a role in the regulation of cell shape and movement by modulating the Rho-family GTPase activity through its interaction with ARHGEF25/GEFT. Induces primordial adhesive contact and aggregation of epithelial cells in a Ca(2+)-independent manner. Important for skeletal muscle and heart development. Also involved in striated muscle regeneration and repair and in the regulation of cell spreading. Important for the maintenance of cardiac function. Plays a regulatory function in heart rate dynamics mediated, at least in part, through cAMP-binding and, probably, by increasing cell surface expression of the potassium channel KCNK2 and enhancing current density. Is a caveolae-associated protein important for the preservation of caveolae structural and functional integrity as well as for heart protection against ischemia injury. The polypeptide is Popeye domain-containing protein 1 (Popdc1) (Rattus norvegicus (Rat)).